The following is a 131-amino-acid chain: Classical arabinogalactan protein 1 (131 aa).

The N-terminal stretch at 1-22 is a signal peptide; sequence MAFSKSLVFVLLAALLISSAVA. Residues 22 to 110 are disordered; sequence AQSPAPAPSN…APGPAQGGAV (89 aa). Positions 50–60 are enriched in pro residues; it reads APAPEVSPSPS. The span at 61-72 shows a compositional bias: low complexity; the sequence is PAAALTPESSAS. A lipid anchor (GPI-anchor amidated glycine) is attached at Gly108. A propeptide spans 109–131 (removed in mature form); it reads AVSNKFASFGSVAVMLTAAVLVI.

It belongs to the classical AGP family. Post-translationally, O-glycosylated on the hydroxyproline residues. As to expression, predominantly expressed in flowers and at a lower level in roots and leaves.

It localises to the cell membrane. Functionally, proteoglycan that seems to be implicated in diverse developmental roles such as differentiation, cell-cell recognition, embryogenesis and programmed cell death. This Arabidopsis thaliana (Mouse-ear cress) protein is Classical arabinogalactan protein 1 (AGP1).